We begin with the raw amino-acid sequence, 98 residues long: Small ribosomal subunit protein bS20 (98 aa).

Residues 76–98 (HPNNGARKKSRLASKLKPIEQTA) form a disordered region.

The protein belongs to the bacterial ribosomal protein bS20 family.

Its function is as follows. Binds directly to 16S ribosomal RNA. In Trichormus variabilis (strain ATCC 29413 / PCC 7937) (Anabaena variabilis), this protein is Small ribosomal subunit protein bS20.